Consider the following 126-residue polypeptide: Holo-[acyl-carrier-protein] synthase (126 aa).

Mg(2+) is bound by residues Asp-9 and Glu-58.

This sequence belongs to the P-Pant transferase superfamily. AcpS family. Mg(2+) is required as a cofactor.

The protein localises to the cytoplasm. The catalysed reaction is apo-[ACP] + CoA = holo-[ACP] + adenosine 3',5'-bisphosphate + H(+). Its function is as follows. Transfers the 4'-phosphopantetheine moiety from coenzyme A to a Ser of acyl-carrier-protein. The polypeptide is Holo-[acyl-carrier-protein] synthase (Salmonella newport (strain SL254)).